A 381-amino-acid chain; its full sequence is Cobalt-precorrin-5B C(1)-methyltransferase (381 aa).

The protein belongs to the CbiD family.

It catalyses the reaction Co-precorrin-5B + S-adenosyl-L-methionine = Co-precorrin-6A + S-adenosyl-L-homocysteine. The protein operates within cofactor biosynthesis; adenosylcobalamin biosynthesis; cob(II)yrinate a,c-diamide from sirohydrochlorin (anaerobic route): step 6/10. Functionally, catalyzes the methylation of C-1 in cobalt-precorrin-5B to form cobalt-precorrin-6A. The protein is Cobalt-precorrin-5B C(1)-methyltransferase of Clostridium botulinum (strain Eklund 17B / Type B).